The chain runs to 192 residues: Large ribosomal subunit protein uL5 (192 aa).

The protein belongs to the universal ribosomal protein uL5 family. In terms of assembly, part of the 50S ribosomal subunit; part of the 5S rRNA/L5/L18/L25 subcomplex. Contacts the 5S rRNA and the P site tRNA. Forms a bridge to the 30S subunit in the 70S ribosome.

Functionally, this is one of the proteins that bind and probably mediate the attachment of the 5S RNA into the large ribosomal subunit, where it forms part of the central protuberance. In the 70S ribosome it contacts protein S13 of the 30S subunit (bridge B1b), connecting the 2 subunits; this bridge is implicated in subunit movement. Contacts the P site tRNA; the 5S rRNA and some of its associated proteins might help stabilize positioning of ribosome-bound tRNAs. The chain is Large ribosomal subunit protein uL5 from Mesorhizobium japonicum (strain LMG 29417 / CECT 9101 / MAFF 303099) (Mesorhizobium loti (strain MAFF 303099)).